A 267-amino-acid chain; its full sequence is uncharacterized protein (267 aa).

Phosphoserine is present on residues Ser-210 and Ser-224.

Testis. Down-regulated in men with spermatocyte arrest.

In terms of biological role, essential for normal spermatogenesis and male fertility. This is an uncharacterized protein from Homo sapiens (Human).